Here is a 258-residue protein sequence, read N- to C-terminus: Hydroxypyruvate isomerase (258 aa).

Residues E143 and E240 each act as proton donor/acceptor in the active site.

It belongs to the hyi family. In terms of assembly, homodimer.

It carries out the reaction 3-hydroxypyruvate = 2-hydroxy-3-oxopropanoate. With respect to regulation, not stimulated by addition of pyridoxal 5'-phosphate (0.1 mM), FAD, NAD(+), NADP(+) or ATP (1 mM each). EDTA (10 mM) and metal ions (1 mM) such as Ca(2+), Co(2+), Mg(2+), Ni(2+), Zn(2+) do not affect the enzyme activity. In terms of biological role, catalyzes the reversible isomerization between hydroxypyruvate and 2-hydroxy-3-oxopropanoate (also termed tartronate semialdehyde). Does not catalyze the isomerization of D-fructose to D-glucose or that of D-xylulose to D-xylose. Also does not catalyze racemization of serine, alanine, glycerate or lactate. In Escherichia coli (strain K12), this protein is Hydroxypyruvate isomerase (hyi).